The following is a 554-amino-acid chain: Propanediol dehydratase large subunit (554 aa).

The protein belongs to the diol/glycerol dehydratase large subunit family. In terms of assembly, the propanediol dehydratase enzyme is a heterotrimeric complex composed of a large (PduC), a medium (PduD) and a small (PduE) subunit. It depends on adenosylcob(III)alamin as a cofactor.

It localises to the bacterial microcompartment. The catalysed reaction is propane-1,2-diol = propanal + H2O. The protein operates within polyol metabolism; 1,2-propanediol degradation. Its activity is regulated as follows. Inhibited by glycerol. Its function is as follows. Part of the PduCDE complex that catalyzes the dehydration of 1,2-propanediol (1,2-PD) to propionaldehyde. Required for S.typhimurium growth on 1,2-PD as the sole carbon and energy source. This subunit is directly targeted to the BMC. Functionally, the 1,2-PD-specific bacterial microcompartment (BMC) concentrates low levels of 1,2-PD catabolic enzymes, concentrates volatile reaction intermediates thus enhancing pathway flux and keeps the level of toxic, mutagenic propionaldehyde low. This chain is Propanediol dehydratase large subunit, found in Salmonella typhimurium (strain LT2 / SGSC1412 / ATCC 700720).